The sequence spans 207 residues: Alpha/beta-tubulin-N-acetyltransferase 9 (207 aa).

Residues 35-180 enclose the N-acetyltransferase domain; sequence EELQRLTASE…QEVTLRLTVS (146 aa).

It belongs to the acetyltransferase family. GNAT subfamily.

The catalysed reaction is N-terminal L-methionyl-[tubulin] + acetyl-CoA = N-terminal N(alpha)-acetyl-L-methionyl-[tubulin] + CoA + H(+). Functionally, N-acetyltransferase that mediates the acetylation of the N-terminal residues of alpha- and beta-tubulin. The sequence is that of Alpha/beta-tubulin-N-acetyltransferase 9 (NAT9) from Homo sapiens (Human).